Consider the following 690-residue polypeptide: DNA ligase (690 aa).

NAD(+)-binding positions include 43-47 (DAEYD), 92-93 (SI), and Glu-129. Residue Lys-131 is the N6-AMP-lysine intermediate of the active site. Residues Arg-152, Glu-188, Lys-309, and Lys-333 each contribute to the NAD(+) site. Residues Cys-427, Cys-430, Cys-445, and Cys-451 each coordinate Zn(2+). The BRCT domain maps to 610–690 (VTPTPLSGKT…GLKELLDGHS (81 aa)).

It belongs to the NAD-dependent DNA ligase family. LigA subfamily. The cofactor is Mg(2+). Mn(2+) is required as a cofactor.

The enzyme catalyses NAD(+) + (deoxyribonucleotide)n-3'-hydroxyl + 5'-phospho-(deoxyribonucleotide)m = (deoxyribonucleotide)n+m + AMP + beta-nicotinamide D-nucleotide.. DNA ligase that catalyzes the formation of phosphodiester linkages between 5'-phosphoryl and 3'-hydroxyl groups in double-stranded DNA using NAD as a coenzyme and as the energy source for the reaction. It is essential for DNA replication and repair of damaged DNA. The chain is DNA ligase from Albidiferax ferrireducens (strain ATCC BAA-621 / DSM 15236 / T118) (Rhodoferax ferrireducens).